The primary structure comprises 735 residues: Catalase-peroxidase (735 aa).

A compositionally biased stretch (polar residues) spans 1-10; the sequence is MMDGAQTNSG. Positions 1–20 are disordered; the sequence is MMDGAQTNSGGCPVMHGGGS. Residues 100–228 constitute a cross-link (tryptophyl-tyrosyl-methioninium (Trp-Tyr) (with M-254)); the sequence is WHSAGTYRTY…LAAVQMGLIY (129 aa). His101 (proton acceptor) is an active-site residue. A cross-link (tryptophyl-tyrosyl-methioninium (Tyr-Met) (with W-100)) is located at residues 228–254; it reads YVNPQGPDGNPDPLASAFDIRDTFARM. His269 contributes to the heme b binding site.

The protein belongs to the peroxidase family. Peroxidase/catalase subfamily. Homodimer or homotetramer. Requires heme b as cofactor. In terms of processing, formation of the three residue Trp-Tyr-Met cross-link is important for the catalase, but not the peroxidase activity of the enzyme.

The catalysed reaction is H2O2 + AH2 = A + 2 H2O. The enzyme catalyses 2 H2O2 = O2 + 2 H2O. In terms of biological role, bifunctional enzyme with both catalase and broad-spectrum peroxidase activity. This chain is Catalase-peroxidase, found in Jannaschia sp. (strain CCS1).